We begin with the raw amino-acid sequence, 835 residues long: Replication origin-binding protein (835 aa).

Residues Pro-54–His-215 enclose the Helicase ATP-binding domain. Ala-67–Thr-74 contacts ATP.

It belongs to the herpesviridae OriBP family. In terms of assembly, homodimer. Interacts with the major DNA-binding protein. Interacts with the helicase/primase component 52 and the polymerase accessory protein.

It localises to the host nucleus. Functions as a docking protein to recruit essential components of the viral replication machinery to viral DNA origins. In the presence of the major DNA-binding protein, opens dsDNA leading to a conformational change in the origin that facilitates DNA unwinding and subsequent replication. The protein is Replication origin-binding protein of Varicella-zoster virus (strain Oka vaccine) (HHV-3).